The chain runs to 310 residues: MIIVTGGAGFIGSNIVKSLNDKGITDILVVDNLKDGTKFVNLVDLNIADYMDKEDFLIQIMAGEEFGDIEAVFHEGACSSTTEWDGKYMMDNNYQYSKELLHYCLERDIPFLYASSAATYGGRTSDFIESREYEKPLNVYGYSKFLFDEYVRQILPEASSQIVGFRYFNVYGPREGHKGSMASVAFHLNTQLNNGETPKLFEGSENFKRDFVYVGDVADVNLWFWENGVSGIFNLGTGRAESFQAVADAALAYHKKSDLEYIPFPEKLKGRYQAFTQADLTNLRAAGYDKPFKTVAEGVTEYMAWLNRDA.

Residues 10-11, 31-32, K38, K53, 75-79, and N92 each bind NADP(+); these read FI, DN, and EGACS. Y140 functions as the Proton acceptor in the catalytic mechanism. An NADP(+)-binding site is contributed by K144. N169 contributes to the substrate binding site. V170 and K178 together coordinate NADP(+). The active-site Proton acceptor is the K178. Residues S180, H187, 201–204, R209, and Y272 each bind substrate; that span reads FEGS.

It belongs to the NAD(P)-dependent epimerase/dehydratase family. HldD subfamily. As to quaternary structure, homopentamer. Requires NADP(+) as cofactor.

The catalysed reaction is ADP-D-glycero-beta-D-manno-heptose = ADP-L-glycero-beta-D-manno-heptose. It participates in nucleotide-sugar biosynthesis; ADP-L-glycero-beta-D-manno-heptose biosynthesis; ADP-L-glycero-beta-D-manno-heptose from D-glycero-beta-D-manno-heptose 7-phosphate: step 4/4. In terms of biological role, catalyzes the interconversion between ADP-D-glycero-beta-D-manno-heptose and ADP-L-glycero-beta-D-manno-heptose via an epimerization at carbon 6 of the heptose. This chain is ADP-L-glycero-D-manno-heptose-6-epimerase, found in Citrobacter koseri (strain ATCC BAA-895 / CDC 4225-83 / SGSC4696).